Reading from the N-terminus, the 245-residue chain is Ribonuclease 3 (245 aa).

One can recognise an RNase III domain in the interval 24–146; it reads YAVFLQKLGY…IIGAIYLESG (123 aa). Glutamate 59 contacts Mg(2+). The active site involves aspartate 63. Residues asparagine 132 and glutamate 135 each coordinate Mg(2+). Residue glutamate 135 is part of the active site. One can recognise a DRBM domain in the interval 173–243; that stretch reads DSKTLLQEYL…ARQAYELAIV (71 aa).

This sequence belongs to the ribonuclease III family. As to quaternary structure, homodimer. It depends on Mg(2+) as a cofactor.

It is found in the cytoplasm. It carries out the reaction Endonucleolytic cleavage to 5'-phosphomonoester.. Digests double-stranded RNA. Involved in the processing of primary rRNA transcript to yield the immediate precursors to the large and small rRNAs (23S and 16S). Processes some mRNAs, and tRNAs when they are encoded in the rRNA operon. Processes pre-crRNA and tracrRNA of type II CRISPR loci if present in the organism. The polypeptide is Ribonuclease 3 (Nitrosomonas europaea (strain ATCC 19718 / CIP 103999 / KCTC 2705 / NBRC 14298)).